Consider the following 400-residue polypeptide: Subtilisin-like protease 7 (400 aa).

Residues 1 to 20 (MGFITKAIPLALAAASVING) form the signal peptide. Residues 21–119 (AEIMETRAGV…IERDARVQIN (99 aa)) constitute a propeptide that is removed on maturation. In terms of domain architecture, Inhibitor I9 spans 36–118 (KYIVVMNDGM…YIERDARVQI (83 aa)). N-linked (GlcNAc...) asparagine glycosylation is present at asparagine 58. The Peptidase S8 domain maps to 129–400 (SWGLARVGSK…SKLINNGSGM (272 aa)). Catalysis depends on charge relay system residues aspartate 161 and histidine 192. N-linked (GlcNAc...) asparagine glycans are attached at residues asparagine 222 and asparagine 252. Serine 346 functions as the Charge relay system in the catalytic mechanism. Asparagine 396 carries an N-linked (GlcNAc...) asparagine glycan.

The protein belongs to the peptidase S8 family.

It is found in the secreted. Secreted subtilisin-like serine protease with keratinolytic activity that contributes to pathogenicity. This chain is Subtilisin-like protease 7 (SUB7), found in Trichophyton verrucosum (Cattle ringworm fungus).